A 463-amino-acid polypeptide reads, in one-letter code: 23S rRNA (uracil(1939)-C(5))-methyltransferase RlmD (463 aa).

The TRAM domain occupies Lys6–Ala76. [4Fe-4S] cluster contacts are provided by Cys90, Cys96, Cys99, and Cys178. Residues Gln288, Phe317, Asn322, Glu341, Asp368, and Asp389 each contribute to the S-adenosyl-L-methionine site. Cys415 acts as the Nucleophile in catalysis.

It belongs to the class I-like SAM-binding methyltransferase superfamily. RNA M5U methyltransferase family. RlmD subfamily.

The catalysed reaction is uridine(1939) in 23S rRNA + S-adenosyl-L-methionine = 5-methyluridine(1939) in 23S rRNA + S-adenosyl-L-homocysteine + H(+). In terms of biological role, catalyzes the formation of 5-methyl-uridine at position 1939 (m5U1939) in 23S rRNA. This Acinetobacter baumannii (strain ACICU) protein is 23S rRNA (uracil(1939)-C(5))-methyltransferase RlmD.